The sequence spans 1320 residues: Probable inactive ATP-dependent zinc metalloprotease FTSHI 5, chloroplastic (1320 aa).

The N-terminal 43 residues, 1–43, are a transit peptide targeting the chloroplast; it reads MDFISASSLSSPFSTQLSPIYLSSGIVSLKPRHRVKNRNFGSR. 3 helical membrane passes run 571 to 591, 633 to 653, and 695 to 715; these read LYLK…WIPM, NIND…IIPY, and FQWF…LYHV. 824-831 provides a ligand contact to ATP; sequence GERGTGKT.

In the N-terminal section; belongs to the AAA ATPase family. It in the C-terminal section; belongs to the peptidase M41 family. In terms of assembly, oligomer.

The protein resides in the plastid. It localises to the chloroplast membrane. Functionally, required for plastid development during embryogenesis. Might be involved in chaperone functions or play a structural role in the thylakoid FtsH complex. The sequence is that of Probable inactive ATP-dependent zinc metalloprotease FTSHI 5, chloroplastic from Arabidopsis thaliana (Mouse-ear cress).